A 407-amino-acid polypeptide reads, in one-letter code: L-cysteine:1D-myo-inositol 2-amino-2-deoxy-alpha-D-glucopyranoside ligase (407 aa).

Cysteine 43 serves as a coordination point for Zn(2+). Residues 43 to 46, threonine 58, and 81 to 83 each bind L-cysteinyl-5'-AMP; these read CGIT and NAT. The 'HIGH' region motif lies at 45-55; sequence ITPYDATHLGH. The 'ERGGDP' region signature appears at 183-188; sequence QRGGDP. Tryptophan 223 provides a ligand contact to L-cysteinyl-5'-AMP. Cysteine 227 contributes to the Zn(2+) binding site. Position 245–247 (245–247) interacts with L-cysteinyl-5'-AMP; that stretch reads GSD. Position 252 (histidine 252) interacts with Zn(2+). Residue valine 279 participates in L-cysteinyl-5'-AMP binding. Residues 285-289 carry the 'KMSKS' region motif; the sequence is KMSKS.

The protein belongs to the class-I aminoacyl-tRNA synthetase family. MshC subfamily. As to quaternary structure, monomer. The cofactor is Zn(2+).

The catalysed reaction is 1D-myo-inositol 2-amino-2-deoxy-alpha-D-glucopyranoside + L-cysteine + ATP = 1D-myo-inositol 2-(L-cysteinylamino)-2-deoxy-alpha-D-glucopyranoside + AMP + diphosphate + H(+). Catalyzes the ATP-dependent condensation of GlcN-Ins and L-cysteine to form L-Cys-GlcN-Ins. The chain is L-cysteine:1D-myo-inositol 2-amino-2-deoxy-alpha-D-glucopyranoside ligase from Streptosporangium roseum (strain ATCC 12428 / DSM 43021 / JCM 3005 / KCTC 9067 / NCIMB 10171 / NRRL 2505 / NI 9100).